A 130-amino-acid polypeptide reads, in one-letter code: Small ribosomal subunit protein bS6 (130 aa).

Residues 100–130 (SPMVKAKDERRERREDFAEAGDDVEAGDSEE) are disordered. The segment covering 104–116 (KAKDERRERREDF) has biased composition (basic and acidic residues). Acidic residues predominate over residues 117–130 (AEAGDDVEAGDSEE).

The protein belongs to the bacterial ribosomal protein bS6 family.

Functionally, binds together with bS18 to 16S ribosomal RNA. The chain is Small ribosomal subunit protein bS6 from Pectobacterium atrosepticum (strain SCRI 1043 / ATCC BAA-672) (Erwinia carotovora subsp. atroseptica).